The chain runs to 45 residues: Large ribosomal subunit protein bL34 (45 aa).

It belongs to the bacterial ribosomal protein bL34 family.

This Streptomyces avermitilis (strain ATCC 31267 / DSM 46492 / JCM 5070 / NBRC 14893 / NCIMB 12804 / NRRL 8165 / MA-4680) protein is Large ribosomal subunit protein bL34.